A 102-amino-acid polypeptide reads, in one-letter code: Hypersensitivity to hygromycin-B protein 1 (102 aa).

The signal sequence occupies residues 1-17 (MSLSFLLFSPFLPPCFS). Residues 18-38 (SISICLSVLSTVSFFFAFTIP) traverse the membrane as a helical segment. The Cytoplasmic segment spans residues 39–69 (HYVLRCGSVDEWHIHSSAEDFRTQRCVCAVK). Residues 70–90 (LSASLLGCLLACASWSLLLEV) traverse the membrane as a helical segment. The Extracellular segment spans residues 91–102 (SRIKWHVGTAYS).

Its subcellular location is the membrane. Its function is as follows. Involved in vacuolar trafficking. The sequence is that of Hypersensitivity to hygromycin-B protein 1 from Saccharomyces cerevisiae (strain ATCC 204508 / S288c) (Baker's yeast).